The sequence spans 422 residues: Monoacylglycerol lipase ABHD2 (422 aa).

At 1 to 15 (MSAQLEADVRTMSPE) the chain is on the cytoplasmic side. The chain crosses the membrane as a helical; Signal-anchor for type II membrane protein span at residues 16 to 36 (MPAMFDGMKLAAVAAVLYVIV). Residues 37-422 (RSLNLKCPTA…HKPQCHQQKE (386 aa)) lie on the Extracellular side of the membrane. Positions 134 to 385 (MVICPGIGNH…HGGHLGFFEG (252 aa)) constitute an AB hydrolase-1 domain. A glycan (N-linked (GlcNAc...) asparagine) is linked at Asn-142. Residue Ser-213 is the Nucleophile of the active site. Asn-285, Asn-335, and Asn-344 each carry an N-linked (GlcNAc...) asparagine glycan. Catalysis depends on charge relay system residues Asp-348 and His-379.

The protein belongs to the AB hydrolase superfamily. AB hydrolase 4 family.

The protein resides in the cell membrane. It catalyses the reaction Hydrolyzes glycerol monoesters of long-chain fatty acids.. The enzyme catalyses an acetyl ester + H2O = an aliphatic alcohol + acetate + H(+). It carries out the reaction a triacylglycerol + H2O = a diacylglycerol + a fatty acid + H(+). The catalysed reaction is 2-(5Z,8Z,11Z,14Z-eicosatetraenoyl)-glycerol + H2O = glycerol + (5Z,8Z,11Z,14Z)-eicosatetraenoate + H(+). It catalyses the reaction a butanoate ester + H2O = an aliphatic alcohol + butanoate + H(+). The enzyme catalyses hexadecanoate ester + H2O = an aliphatic alcohol + hexadecanoate + H(+). Its activity is regulated as follows. Acylglycerol lipase activity is activated upon binding to progesterone. Its function is as follows. Progesterone-dependent acylglycerol lipase that catalyzes hydrolysis of endocannabinoid arachidonoylglycerol (AG) from cell membrane. Acts as a progesterone receptor: progesterone-binding activates the acylglycerol lipase activity, mediating degradation of 1-arachidonoylglycerol (1AG) and 2-arachidonoylglycerol (2AG) to glycerol and arachidonic acid (AA). Also displays an ester hydrolase activity against acetyl ester, butanoate ester and hexadecanoate ester. Plays a key role in sperm capacitation in response to progesterone by mediating degradation of 2AG, an inhibitor of the sperm calcium channel CatSper, leading to calcium influx via CatSper and sperm activation. May also play a role in smooth muscle cells migration. The polypeptide is Monoacylglycerol lipase ABHD2 (abhd2b) (Danio rerio (Zebrafish)).